The primary structure comprises 281 residues: 3-methyl-2-oxobutanoate hydroxymethyltransferase (281 aa).

Mg(2+) contacts are provided by D44 and D83. 3-methyl-2-oxobutanoate-binding positions include 44-45, D83, and K112; that span reads DS. E114 is a binding site for Mg(2+). E180 serves as the catalytic Proton acceptor. Residues 251–281 form a disordered region; it reads RNGTFPGPEHSSRMDPAELAAALGSQDQATE.

Belongs to the PanB family. As to quaternary structure, homodecamer; pentamer of dimers. The cofactor is Mg(2+).

It localises to the cytoplasm. It carries out the reaction 3-methyl-2-oxobutanoate + (6R)-5,10-methylene-5,6,7,8-tetrahydrofolate + H2O = 2-dehydropantoate + (6S)-5,6,7,8-tetrahydrofolate. It functions in the pathway cofactor biosynthesis; (R)-pantothenate biosynthesis; (R)-pantoate from 3-methyl-2-oxobutanoate: step 1/2. Functionally, catalyzes the reversible reaction in which hydroxymethyl group from 5,10-methylenetetrahydrofolate is transferred onto alpha-ketoisovalerate to form ketopantoate. The sequence is that of 3-methyl-2-oxobutanoate hydroxymethyltransferase from Chloroflexus aurantiacus (strain ATCC 29364 / DSM 637 / Y-400-fl).